Here is a 475-residue protein sequence, read N- to C-terminus: Ankyrin repeat, SAM and basic leucine zipper domain-containing protein 1 (475 aa).

A disordered region spans residues M1–W24. S16, S17, and S19 each carry phosphoserine. ANK repeat units lie at residues E44–S73, F77–F106, D109–R146, K147–A176, N180–I209, and D213–G242. In terms of domain architecture, SAM spans T273–E336.

Interacts with DDX4, PIWIL1, RANBP9 and TDRD1.

The protein localises to the cytoplasm. Plays a central role during spermatogenesis by repressing transposable elements and preventing their mobilization, which is essential for the germline integrity. Acts via the piRNA metabolic process, which mediates the repression of transposable elements during meiosis by forming complexes composed of piRNAs and Piwi proteins and governs the methylation and subsequent repression of transposons. Its association with pi-bodies suggests a participation in the primary piRNAs metabolic process. Required prior to the pachytene stage to facilitate the production of multiple types of piRNAs, including those associated with repeats involved in the regulation of retrotransposons. May act by mediating protein-protein interactions during germ cell maturation. In Notamacropus eugenii (Tammar wallaby), this protein is Ankyrin repeat, SAM and basic leucine zipper domain-containing protein 1 (ASZ1).